The chain runs to 196 residues: Probable thymidylate kinase (196 aa).

Gly7–Thr14 contributes to the ATP binding site.

The protein belongs to the thymidylate kinase family.

The catalysed reaction is dTMP + ATP = dTDP + ADP. The sequence is that of Probable thymidylate kinase (tmk) from Archaeoglobus fulgidus (strain ATCC 49558 / DSM 4304 / JCM 9628 / NBRC 100126 / VC-16).